A 361-amino-acid chain; its full sequence is Mitochondrial import receptor subunit TOM40 homolog (361 aa).

Low complexity predominate over residues methionine 1–proline 10. The disordered stretch occupies residues methionine 1–aspartate 71. A compositionally biased stretch (pro residues) spans proline 11–threonine 36. Residues leucine 40–arginine 52 show a composition bias toward gly residues. Residues glycine 59–aspartate 71 show a composition bias toward low complexity.

Belongs to the Tom40 family. Forms part of the preprotein translocase complex of the outer mitochondrial membrane (TOM complex) which consists of at least 7 different proteins (TOMM5, TOMM6, TOMM7, TOMM20, TOMM22, TOMM40 and TOMM70). Interacts with mitochondrial targeting sequences. Interacts with TIMM29; linking the TIM22 complex to the TOM complex. Forms a complex with BCAP31 (via C-terminus) which mediates the translocation of components of the mitochondrial membrane respiratory chain NADH dehydrogenase (Complex I) from the cytosol to the mitochondria. Interacts (via N-terminus) with CYP1A1 (via mitochondrial targeting signal); this interaction is required for CYP1A1 translocation across the mitochondrial outer membrane.

It localises to the mitochondrion outer membrane. Channel-forming protein essential for import of protein precursors into mitochondria. Plays a role in the assembly of the mitochondrial membrane respiratory chain NADH dehydrogenase (Complex I) by forming a complex with BCAP31 and mediating the translocation of Complex I components from the cytosol to the mitochondria. In Bos taurus (Bovine), this protein is Mitochondrial import receptor subunit TOM40 homolog.